The following is a 388-amino-acid chain: Pepsin A (388 aa).

The N-terminal stretch at 1-15 is a signal peptide; the sequence is MKWLLLLGLVALSEC. Residues 16-62 constitute a propeptide, activation peptide; the sequence is IIYKVPLVRKKSLRRNLSEHGLLKDFLKKHNRNPASKYFPQTEAPTL. Residues 76–385 enclose the Peptidase A1 domain; it reads YFGTIGIGTP…DRANNQVGLA (310 aa). Aspartate 94 is a catalytic residue. Cysteine 107 and cysteine 112 form a disulfide bridge. Serine 130 is subject to Phosphoserine. Cysteine 268 and cysteine 272 are oxidised to a cystine. Residue aspartate 277 is part of the active site. The cysteines at positions 311 and 344 are disulfide-linked.

The protein belongs to the peptidase A1 family.

It localises to the secreted. It carries out the reaction Preferential cleavage: hydrophobic, preferably aromatic, residues in P1 and P1' positions. Cleaves 1-Phe-|-Val-2, 4-Gln-|-His-5, 13-Glu-|-Ala-14, 14-Ala-|-Leu-15, 15-Leu-|-Tyr-16, 16-Tyr-|-Leu-17, 23-Gly-|-Phe-24, 24-Phe-|-Phe-25 and 25-Phe-|-Tyr-26 bonds in the B chain of insulin.. Its function is as follows. Shows particularly broad specificity; although bonds involving phenylalanine and leucine are preferred, many others are also cleaved to some extent. The sequence is that of Pepsin A (PGA) from Macaca mulatta (Rhesus macaque).